The sequence spans 54 residues: Ovomucoid (54 aa).

The 51-residue stretch at 4–54 (VDCSDYPKPVCSLEYMPLCGSDNKTYGNKCNFCNAVADSNGTLTLSHFGKC) folds into the Kazal-like domain. 3 disulfides stabilise this stretch: Cys6-Cys36, Cys14-Cys33, and Cys22-Cys54. N-linked (GlcNAc...) asparagine glycosylation is present at Asn43.

It localises to the secreted. This chain is Ovomucoid, found in Guira guira (Guira cuckoo).